We begin with the raw amino-acid sequence, 61 residues long: ATP synthase F(0) complex subunit 8 (61 aa).

A helical membrane pass occupies residues 10-32; that stretch reads FMILSSTWLIYTIILQPKILSHL.

It belongs to the ATPase protein 8 family. Component of the ATP synthase complex composed at least of ATP5F1A/subunit alpha, ATP5F1B/subunit beta, ATP5MC1/subunit c (homooctomer), MT-ATP6/subunit a, MT-ATP8/subunit 8, ATP5ME/subunit e, ATP5MF/subunit f, ATP5MG/subunit g, ATP5MK/subunit k, ATP5MJ/subunit j, ATP5F1C/subunit gamma, ATP5F1D/subunit delta, ATP5F1E/subunit epsilon, ATP5PF/subunit F6, ATP5PB/subunit b, ATP5PD/subunit d, ATP5PO/subunit OSCP. ATP synthase complex consists of a soluble F(1) head domain (subunits alpha(3) and beta(3)) - the catalytic core - and a membrane F(0) domain - the membrane proton channel (subunits c, a, 8, e, f, g, k and j). These two domains are linked by a central stalk (subunits gamma, delta, and epsilon) rotating inside the F1 region and a stationary peripheral stalk (subunits F6, b, d, and OSCP).

It localises to the mitochondrion membrane. In terms of biological role, subunit 8, of the mitochondrial membrane ATP synthase complex (F(1)F(0) ATP synthase or Complex V) that produces ATP from ADP in the presence of a proton gradient across the membrane which is generated by electron transport complexes of the respiratory chain. ATP synthase complex consist of a soluble F(1) head domain - the catalytic core - and a membrane F(1) domain - the membrane proton channel. These two domains are linked by a central stalk rotating inside the F(1) region and a stationary peripheral stalk. During catalysis, ATP synthesis in the catalytic domain of F(1) is coupled via a rotary mechanism of the central stalk subunits to proton translocation. In vivo, can only synthesize ATP although its ATP hydrolase activity can be activated artificially in vitro. Part of the complex F(0) domain. In Chelonia mydas (Green sea-turtle), this protein is ATP synthase F(0) complex subunit 8.